We begin with the raw amino-acid sequence, 555 residues long: Glutamine--tRNA ligase (555 aa).

The short motif at 34–44 (PEPNGYLHIGH) is the 'HIGH' region element. ATP-binding positions include 35 to 37 (EPN) and 41 to 47 (HIGHAKS). The L-glutamine site is built by D67 and Y212. ATP-binding positions include T231, 261–262 (RL), and 269–271 (MSK). Positions 268–272 (VMSKR) match the 'KMSKS' region motif.

The protein belongs to the class-I aminoacyl-tRNA synthetase family. As to quaternary structure, monomer.

It localises to the cytoplasm. The catalysed reaction is tRNA(Gln) + L-glutamine + ATP = L-glutaminyl-tRNA(Gln) + AMP + diphosphate. The polypeptide is Glutamine--tRNA ligase (Cronobacter sakazakii (strain ATCC BAA-894) (Enterobacter sakazakii)).